Consider the following 89-residue polypeptide: Small ribosomal subunit protein uS14B (89 aa).

A disordered region spans residues 38-61 (KLPKDAHPSRLKLRDQTDGRPRGY). A compositionally biased stretch (basic and acidic residues) spans 39–58 (LPKDAHPSRLKLRDQTDGRP).

This sequence belongs to the universal ribosomal protein uS14 family. As to quaternary structure, part of the 30S ribosomal subunit. Contacts proteins S3 and S10.

Functionally, binds 16S rRNA, required for the assembly of 30S particles and may also be responsible for determining the conformation of the 16S rRNA at the A site. The polypeptide is Small ribosomal subunit protein uS14B (Enterococcus faecalis (strain ATCC 700802 / V583)).